The sequence spans 195 residues: ATP-dependent Clp protease proteolytic subunit (195 aa).

Residue S94 is the Nucleophile of the active site. The active site involves H119.

Belongs to the peptidase S14 family. Component of the chloroplastic Clp protease core complex.

It is found in the plastid. Its subcellular location is the chloroplast stroma. It catalyses the reaction Hydrolysis of proteins to small peptides in the presence of ATP and magnesium. alpha-casein is the usual test substrate. In the absence of ATP, only oligopeptides shorter than five residues are hydrolyzed (such as succinyl-Leu-Tyr-|-NHMec, and Leu-Tyr-Leu-|-Tyr-Trp, in which cleavage of the -Tyr-|-Leu- and -Tyr-|-Trp bonds also occurs).. Cleaves peptides in various proteins in a process that requires ATP hydrolysis. Has a chymotrypsin-like activity. Plays a major role in the degradation of misfolded proteins. The chain is ATP-dependent Clp protease proteolytic subunit from Cycas taitungensis (Prince sago).